A 208-amino-acid polypeptide reads, in one-letter code: Protein-L-isoaspartate O-methyltransferase (208 aa).

The active site involves serine 59.

This sequence belongs to the methyltransferase superfamily. L-isoaspartyl/D-aspartyl protein methyltransferase family.

Its subcellular location is the cytoplasm. It carries out the reaction [protein]-L-isoaspartate + S-adenosyl-L-methionine = [protein]-L-isoaspartate alpha-methyl ester + S-adenosyl-L-homocysteine. Catalyzes the methyl esterification of L-isoaspartyl residues in peptides and proteins that result from spontaneous decomposition of normal L-aspartyl and L-asparaginyl residues. It plays a role in the repair and/or degradation of damaged proteins. This Shigella sonnei (strain Ss046) protein is Protein-L-isoaspartate O-methyltransferase.